The chain runs to 400 residues: MVGVTSISSPAISADERSHEVDHPSSLVAHFGADQPLPLDCGIDLTPFQIAYQTYGELNADRSNAILICHALTGDQHVANVHPVTGKPGWWETLVGAGRPLDPSQYFIICANVIGGCMGSTGPASINPATGKVWGLDFPVITIPDMVRAQAMLIDRLGIDTLFAVVGGSMGGMQVLQWTAAYPERVYSALAIACSTRHSAQNIAFHELGRQAVMADPDWHNGGYADRGIHPHRGLAVARMAAHITYLSDAALHRKFGRRMQDRDLPTFSFDADFQVESYLRYQGSSFVERFDANSYLYLTRAMDYFDIAGDHGGVLAKAFAGIKTRFCVVSFTSDWLFPTSESRALVHALNASSARVSFAEIETDRGHDAFLLDVPEFFDIARAFLESAGKARGLNGRGG.

The region spanning asparagine 64–leucine 373 is the AB hydrolase-1 domain. The active-site Nucleophile is the serine 169. Residue arginine 239 participates in substrate binding. Active-site residues include aspartate 335 and histidine 368. Residue aspartate 369 participates in substrate binding.

The protein belongs to the AB hydrolase superfamily. MetX family. Homodimer.

The protein resides in the cytoplasm. It carries out the reaction L-homoserine + acetyl-CoA = O-acetyl-L-homoserine + CoA. It functions in the pathway amino-acid biosynthesis; L-methionine biosynthesis via de novo pathway; O-acetyl-L-homoserine from L-homoserine: step 1/1. Transfers an acetyl group from acetyl-CoA to L-homoserine, forming acetyl-L-homoserine. This Bradyrhizobium diazoefficiens (strain JCM 10833 / BCRC 13528 / IAM 13628 / NBRC 14792 / USDA 110) protein is Homoserine O-acetyltransferase.